The primary structure comprises 248 residues: Probable transcriptional regulatory protein Mchl_0946 (248 aa).

This sequence belongs to the TACO1 family.

The protein resides in the cytoplasm. The polypeptide is Probable transcriptional regulatory protein Mchl_0946 (Methylorubrum extorquens (strain CM4 / NCIMB 13688) (Methylobacterium extorquens)).